Here is a 570-residue protein sequence, read N- to C-terminus: MPAKISRAAYADMYGPTTGDKVRLADTELFIEVEKDFTTYGEEVKFGGGKVIRDGMGQSQVSRADGAVDTVITNALVIDVTGIYKADIGLRDGRIAAIGKAGNPDTQPGVNIIVGPGTEAIAGEGKILTAGGFDAHIHFICPQQIEEALMSGLTTMLGGGTGPAHGTLATTCTPGSFHIGRMIQSFDAFPMNIGLAGKGNASLPAPLIEMIKAGACAMKLHEDWGTTPAAIDNCLAVADDHDVQVMIHTDTLNESGFVENTIAAFKGRTIHAFHTEGAGGGHAPDIIKVAGLPNVIPSSTNPTRPYTVNTIAEHLDMLMVCHHLSPSIPEDVAFAESRIRKETIAAEDILHDLGAFSIISSDSQAMGRVGEVIIRTWQTADKMKRQRGKLPEETGDNDNFRVKRYIAKYTINPAIAHGVSKHIGSIEVGKRADLVLWNPAFFGVKPEMILLGGTIAAAPMGDPNASIPTPQPMHYRPMFGAYGKAIAASSVTFVSEAALSDGLQQKLGVEKGMLAVENTRSGIGKKAMVFNDATPHIEVDPETYEVRADGELLTCEPATVLPMAQRYFLF.

The Urease domain maps to 131–570 (GGFDAHIHFI…LPMAQRYFLF (440 aa)). 3 residues coordinate Ni(2+): His-136, His-138, and Lys-219. At Lys-219 the chain carries N6-carboxylysine. His-221 contributes to the substrate binding site. Ni(2+)-binding residues include His-248 and His-274. The active-site Proton donor is His-322. Ni(2+) is bound at residue Asp-362.

The protein belongs to the metallo-dependent hydrolases superfamily. Urease alpha subunit family. As to quaternary structure, heterotrimer of UreA (gamma), UreB (beta) and UreC (alpha) subunits. Three heterotrimers associate to form the active enzyme. The cofactor is Ni cation. Carboxylation allows a single lysine to coordinate two nickel ions.

It is found in the cytoplasm. It catalyses the reaction urea + 2 H2O + H(+) = hydrogencarbonate + 2 NH4(+). Its pathway is nitrogen metabolism; urea degradation; CO(2) and NH(3) from urea (urease route): step 1/1. This Chelativorans sp. (strain BNC1) protein is Urease subunit alpha.